The primary structure comprises 45 residues: Mu-conotoxin-like Cal 12.1.2g (45 aa).

4 disulfides stabilise this stretch: Cys3-Cys16, Cys11-Cys28, Cys18-Cys33, and Cys27-Cys39. 4-hydroxyproline is present on Pro23. 2 positions are modified to 6'-bromotryptophan: Trp37 and Trp38. Pro40 is modified (4-hydroxyproline).

Expressed by the venom duct.

Its subcellular location is the secreted. Functionally, mu-conotoxins block voltage-gated sodium channels. This toxin reversibly blocks voltage-gated sodium channel in cephalopods, with no alteration in the voltage dependence of sodium conductance or on the kinetics of inactivation. This is Mu-conotoxin-like Cal 12.1.2g from Californiconus californicus (California cone).